We begin with the raw amino-acid sequence, 200 residues long: Riboflavin kinase (200 aa).

A disordered region spans residues 1 to 20; the sequence is MATARPSIVGPDSGPESPFP. The Mg(2+) site is built by threonine 42 and asparagine 44. The active-site Nucleophile is the glutamate 110.

It belongs to the flavokinase family. It depends on Zn(2+) as a cofactor. Requires Mg(2+) as cofactor.

The catalysed reaction is riboflavin + ATP = FMN + ADP + H(+). The protein operates within cofactor biosynthesis; FMN biosynthesis; FMN from riboflavin (ATP route): step 1/1. Its function is as follows. Catalyzes the phosphorylation of riboflavin (vitamin B2) to form flavin mononucleotide (FMN) coenzyme. The sequence is that of Riboflavin kinase (FMN1) from Pyricularia oryzae (strain 70-15 / ATCC MYA-4617 / FGSC 8958) (Rice blast fungus).